Here is a 492-residue protein sequence, read N- to C-terminus: Transmembrane protein 104 homolog (492 aa).

Over 1–18 (MQSNTDSSGTSGTYSQTV) the chain is Cytoplasmic. The chain crosses the membrane as a helical span at residues 19–39 (GLLYVFNLIVGTGALALPKAF). The Extracellular segment spans residues 40–45 (QSAGWL). The chain crosses the membrane as a helical span at residues 46 to 66 (LSISLLTFSAFMSYVAATFVI). The Cytoplasmic portion of the chain corresponds to 67–114 (EALSVANAVLSKKRRVEYDDVVVADGPSTFEIAKKVEVSEMASMFLSK). Residues 115-135 (VSLVFSYFAIIIYLFGDLAIY) form a helical membrane-spanning segment. Residues 136–177 (STTVPKSAMNIVCSTINATIVKSSDPCHESWPEILTRMTVYR) lie on the Extracellular side of the membrane. N-linked (GlcNAc...) asparagine glycosylation occurs at N152. The helical transmembrane segment at 178–198 (FFVIVFVVVVCLPMVIAGITK) threads the bilayer. Topologically, residues 199–210 (TRHIQIMTTLSR) are cytoplasmic. Residues 211–231 (WAAFILMISLATMQLSSQGAA) form a helical membrane-spanning segment. Topologically, residues 232 to 238 (AHPPAYN) are extracellular. Residues 239–259 (FHGFGSLFGCAVYAFMCHHSI) traverse the membrane as a helical segment. Residues 260–275 (PSLITPMRTKENVFGK) lie on the Cytoplasmic side of the membrane. Residues 276–296 (IAVVYGIVGVFYFTLSLTGAF) traverse the membrane as a helical segment. Residues 297–325 (AFEHVQDIYTLNFLHDDNTSLVYSIIDYF) lie on the Extracellular side of the membrane. Residue N314 is glycosylated (N-linked (GlcNAc...) asparagine). The helical transmembrane segment at 326 to 346 (LALFPIITLTSSYPIIALTLI) threads the bilayer. The Cytoplasmic segment spans residues 347-391 (NNFKVVKDILCPKTGQENESLLEADNQVEDNDTDDEREARNGNPK). Over residues 367 to 382 (LLEADNQVEDNDTDDE) the composition is skewed to acidic residues. Residues 367–387 (LLEADNQVEDNDTDDEREARN) form a disordered region. The chain crosses the membrane as a helical span at residues 392–412 (TIFDVLVPTLVLALPTFLSLL). Residues 413–415 (TDD) are Extracellular-facing. A helical transmembrane segment spans residues 416–436 (MLLLASITGSFPGVAVQFAIP). At 437-466 (CLLVTAARKHARSVLNFPVPRKNNSPFQSR) the chain is on the cytoplasmic side. Residues 467–487 (FWIMLISSWAGFSMIMVLLNL) form a helical membrane-spanning segment. Topologically, residues 488–492 (VGVKF) are extracellular.

Belongs to the TMEM104 family.

Its subcellular location is the membrane. This chain is Transmembrane protein 104 homolog, found in Caenorhabditis briggsae.